The following is a 209-amino-acid chain: Glycerol-3-phosphate acyltransferase (209 aa).

Helical transmembrane passes span 7–27 (IELAGIAGAYFLGSLSSAIIV), 85–105 (AIILVGFASFIGHLYPIFFGF), 117–137 (VMFGLSLPIGAAVAGTWLFVA), 142–162 (ISSLSALIATALAPLYIYLLA), and 166–183 (MAWVSVTAIMTLILFWRH).

Belongs to the PlsY family. In terms of assembly, probably interacts with PlsX.

It is found in the cell inner membrane. It catalyses the reaction an acyl phosphate + sn-glycerol 3-phosphate = a 1-acyl-sn-glycero-3-phosphate + phosphate. It functions in the pathway lipid metabolism; phospholipid metabolism. Its function is as follows. Catalyzes the transfer of an acyl group from acyl-phosphate (acyl-PO(4)) to glycerol-3-phosphate (G3P) to form lysophosphatidic acid (LPA). This enzyme utilizes acyl-phosphate as fatty acyl donor, but not acyl-CoA or acyl-ACP. The polypeptide is Glycerol-3-phosphate acyltransferase (Hydrogenovibrio crunogenus (strain DSM 25203 / XCL-2) (Thiomicrospira crunogena)).